We begin with the raw amino-acid sequence, 369 residues long: Peptide chain release factor 2 (369 aa).

Position 251 is an N5-methylglutamine (Gln251).

It belongs to the prokaryotic/mitochondrial release factor family. Post-translationally, methylated by PrmC. Methylation increases the termination efficiency of RF2.

The protein resides in the cytoplasm. In terms of biological role, peptide chain release factor 2 directs the termination of translation in response to the peptide chain termination codons UGA and UAA. In Thermotoga maritima (strain ATCC 43589 / DSM 3109 / JCM 10099 / NBRC 100826 / MSB8), this protein is Peptide chain release factor 2 (prfB).